A 485-amino-acid chain; its full sequence is Glycogen synthase (485 aa).

K15 provides a ligand contact to ADP-alpha-D-glucose.

Belongs to the glycosyltransferase 1 family. Bacterial/plant glycogen synthase subfamily.

It catalyses the reaction [(1-&gt;4)-alpha-D-glucosyl](n) + ADP-alpha-D-glucose = [(1-&gt;4)-alpha-D-glucosyl](n+1) + ADP + H(+). The protein operates within glycan biosynthesis; glycogen biosynthesis. Synthesizes alpha-1,4-glucan chains using ADP-glucose. The protein is Glycogen synthase (glgA) of Geobacillus stearothermophilus (Bacillus stearothermophilus).